Here is a 253-residue protein sequence, read N- to C-terminus: Large ribosomal subunit protein uL2C (253 aa).

The protein belongs to the universal ribosomal protein uL2 family. Component of the large ribosomal subunit (LSU). Mature yeast ribosomes consist of a small (40S) and a large (60S) subunit. The 40S small subunit contains 1 molecule of ribosomal RNA (18S rRNA) and at least 33 different proteins. The large 60S subunit contains 3 rRNA molecules (25S, 5.8S and 5S rRNA) and at least 46 different proteins.

Its subcellular location is the cytoplasm. The protein localises to the nucleus. Component of the ribosome, a large ribonucleoprotein complex responsible for the synthesis of proteins in the cell. The small ribosomal subunit (SSU) binds messenger RNAs (mRNAs) and translates the encoded message by selecting cognate aminoacyl-transfer RNA (tRNA) molecules. The large subunit (LSU) contains the ribosomal catalytic site termed the peptidyl transferase center (PTC), which catalyzes the formation of peptide bonds, thereby polymerizing the amino acids delivered by tRNAs into a polypeptide chain. The nascent polypeptides leave the ribosome through a tunnel in the LSU and interact with protein factors that function in enzymatic processing, targeting, and the membrane insertion of nascent chains at the exit of the ribosomal tunnel. This is Large ribosomal subunit protein uL2C (rpl803) from Schizosaccharomyces pombe (strain 972 / ATCC 24843) (Fission yeast).